The following is a 405-amino-acid chain: uncharacterized protein (405 aa).

10 helical membrane passes run 9 to 29, 41 to 61, 74 to 94, 98 to 118, 138 to 158, 168 to 190, 227 to 247, 252 to 272, 291 to 311, and 373 to 393; these read VFAL…VTIV, VFLA…ASFC, VLAG…YSVT, QAFF…GAFF, ANGV…GLGG, LVVG…LHVN, ALAG…AVLH, WWGM…VIAI, LVMS…LCAL, and IAFI…LAQP.

It belongs to the major facilitator superfamily. Drug:H(+) antiporter-3 (DHA3) (TC 2.A.1.21) family.

Its subcellular location is the cell membrane. This is an uncharacterized protein from Bacillus subtilis (strain 168).